We begin with the raw amino-acid sequence, 76 residues long: Sec-independent protein translocase protein TatA (76 aa).

Residues 1–21 (MGSFSIWHWLIVLLIVVLVFG) traverse the membrane as a helical segment. Residues 44 to 76 (RDGSTAPADPAQQVTANKSADANTVDVEAKQKS) are disordered. The span at 55–65 (QQVTANKSADA) shows a compositional bias: polar residues.

The protein belongs to the TatA/E family. As to quaternary structure, the Tat system comprises two distinct complexes: a TatABC complex, containing multiple copies of TatA, TatB and TatC subunits, and a separate TatA complex, containing only TatA subunits. Substrates initially bind to the TatABC complex, which probably triggers association of the separate TatA complex to form the active translocon.

The protein resides in the cell inner membrane. Its function is as follows. Part of the twin-arginine translocation (Tat) system that transports large folded proteins containing a characteristic twin-arginine motif in their signal peptide across membranes. TatA could form the protein-conducting channel of the Tat system. This chain is Sec-independent protein translocase protein TatA, found in Methylibium petroleiphilum (strain ATCC BAA-1232 / LMG 22953 / PM1).